A 243-amino-acid polypeptide reads, in one-letter code: ATP synthase subunit a (243 aa).

8 consecutive transmembrane segments (helical) span residues 28 to 48 (SSLY…AGVF), 52 to 72 (VIPG…LGII), 83 to 103 (YFPL…VGML), 114 to 134 (HIVV…LIGL), 141 to 161 (FFAM…MIFL), 177 to 197 (LTAN…FVYP), 200 to 220 (LLIS…EVFI), and 221 to 241 (AMLQ…DSLF).

The protein belongs to the ATPase A chain family. F-type ATPases have 2 components, CF(1) - the catalytic core - and CF(0) - the membrane proton channel. CF(1) has five subunits: alpha(3), beta(3), gamma(1), delta(1), epsilon(1). CF(0) has three main subunits: a(1), b(2) and c(9-12). The alpha and beta chains form an alternating ring which encloses part of the gamma chain. CF(1) is attached to CF(0) by a central stalk formed by the gamma and epsilon chains, while a peripheral stalk is formed by the delta and b chains.

Its subcellular location is the cell inner membrane. Key component of the proton channel; it plays a direct role in the translocation of protons across the membrane. The protein is ATP synthase subunit a of Neorickettsia sennetsu (strain ATCC VR-367 / Miyayama) (Ehrlichia sennetsu).